The following is a 279-amino-acid chain: Protease HtpX homolog (279 aa).

2 consecutive transmembrane segments (helical) span residues T6–G26 and G28–S48. Zn(2+) is bound at residue H127. Residue E128 is part of the active site. Residue H131 participates in Zn(2+) binding. The next 2 helical transmembrane spans lie at I137 to A157 and L177 to I197. E202 contributes to the Zn(2+) binding site.

It belongs to the peptidase M48B family. Zn(2+) is required as a cofactor.

The protein resides in the cell inner membrane. The protein is Protease HtpX homolog of Syntrophotalea carbinolica (strain DSM 2380 / NBRC 103641 / GraBd1) (Pelobacter carbinolicus).